Consider the following 225-residue polypeptide: Paired immunoglobulin-like type 2 receptor beta-2 (225 aa).

Residues M1–S31 form the signal peptide. The Extracellular segment spans residues A32 to M195. N90, N107, and N160 each carry an N-linked (GlcNAc...) asparagine glycan. Residues V196–L216 form a helical membrane-spanning segment. Over R217–A225 the chain is Cytoplasmic.

Its subcellular location is the membrane. Functionally, paired receptors consist of highly related activating and inhibitory receptors and are widely involved in the regulation of the immune system. PILRB2 is probably a cellular signaling activating receptor that associates with ITAM-bearing adapter molecules on the cell surface. The chain is Paired immunoglobulin-like type 2 receptor beta-2 (Pilrb2) from Mus musculus (Mouse).